The following is a 309-amino-acid chain: Homoserine kinase (309 aa).

88–98 contacts ATP; the sequence is PLARGLGSSAA.

This sequence belongs to the GHMP kinase family. Homoserine kinase subfamily.

It is found in the cytoplasm. The enzyme catalyses L-homoserine + ATP = O-phospho-L-homoserine + ADP + H(+). Its pathway is amino-acid biosynthesis; L-threonine biosynthesis; L-threonine from L-aspartate: step 4/5. Catalyzes the ATP-dependent phosphorylation of L-homoserine to L-homoserine phosphate. The chain is Homoserine kinase from Halalkalibacterium halodurans (strain ATCC BAA-125 / DSM 18197 / FERM 7344 / JCM 9153 / C-125) (Bacillus halodurans).